Reading from the N-terminus, the 173-residue chain is Alpha-crystallin A chain (173 aa).

M1 is subject to N-acetylmethionine. Positions 1 to 63 (MDIAIQHPWF…RTVLDSGISE (63 aa)) are required for complex formation with BFSP1 and BFSP2. Deamidated glutamine; partial is present on Q6. Residue S45 is modified to Phosphoserine. The residue at position 50 (Q50) is a Deamidated glutamine; partial. In terms of domain architecture, sHSP spans 52 to 162 (LFRTVLDSGI…GHSERAIPVS (111 aa)). 2 positions are modified to N6-acetyllysine: K70 and K99. H100 lines the Zn(2+) pocket. N101 is modified (deamidated asparagine; partial). 2 residues coordinate Zn(2+): E102 and H107. S122 is modified (phosphoserine). Deamidated asparagine; partial is present on N123. The segment at 144-173 (PKVPSGVDAGHSERAIPVSREEKPSSAPSS) is disordered. A compositionally biased stretch (basic and acidic residues) spans 153–167 (GHSERAIPVSREEKP). Position 154 (H154) interacts with Zn(2+). A glycan (O-linked (GlcNAc) serine) is linked at S162.

It belongs to the small heat shock protein (HSP20) family. In terms of assembly, heteromer composed of three CRYAA and one CRYAB subunits. Inter-subunit bridging via zinc ions enhances stability, which is crucial as there is no protein turn over in the lens. Can also form homodimers and homotetramers (dimers of dimers) which serve as the building blocks of homooligomers. Within homooligomers, the zinc-binding motif is created from residues of 3 different molecules. His-100 and Glu-102 from one molecule are ligands of the zinc ion, and His-107 and His-154 residues from additional molecules complete the site with tetrahedral coordination geometry. Part of a complex required for lens intermediate filament formation composed of BFSP1, BFSP2 and CRYAA. Acetylation at Lys-70 may increase chaperone activity. Post-translationally, undergoes age-dependent proteolytical cleavage at the C-terminus.

The protein resides in the cytoplasm. The protein localises to the nucleus. In terms of biological role, contributes to the transparency and refractive index of the lens. Acts as a chaperone, preventing aggregation of various proteins under a wide range of stress conditions. Required for the correct formation of lens intermediate filaments as part of a complex composed of BFSP1, BFSP2 and CRYAA. The protein is Alpha-crystallin A chain (CRYAA) of Canis lupus familiaris (Dog).